We begin with the raw amino-acid sequence, 358 residues long: Probable tartrate dehydrogenase/decarboxylase TtuC' (358 aa).

Positions 222, 246, and 250 each coordinate Mn(2+).

It belongs to the isocitrate and isopropylmalate dehydrogenases family. The cofactor is Mg(2+). Mn(2+) serves as cofactor. K(+) is required as a cofactor.

The protein localises to the cytoplasm. It carries out the reaction tartrate + NAD(+) = 2-hydroxy-3-oxosuccinate + NADH + H(+). It catalyses the reaction (2R,3S)-tartrate + NAD(+) = 2-hydroxy-3-oxosuccinate + NADH + H(+). The enzyme catalyses (2R,3R)-tartrate + NAD(+) = 2-hydroxy-3-oxosuccinate + NADH + H(+). The catalysed reaction is (2R,3R)-tartrate + H(+) = (R)-glycerate + CO2. It carries out the reaction (R)-malate + NAD(+) = pyruvate + CO2 + NADH. It functions in the pathway carbohydrate acid metabolism; tartrate degradation; 2-hydroxy-3-oxosuccinate from L-tartrate: step 1/1. It participates in carbohydrate acid metabolism; tartrate degradation; 2-hydroxy-3-oxosuccinate from meso-tartrate: step 1/1. The protein operates within carbohydrate acid metabolism; tartrate degradation; D-glycerate from L-tartrate: step 1/1. Its function is as follows. Has multiple catalytic activities. Apart from catalyzing the oxidation of (+)-tartrate to oxaloglycolate, also converts meso-tartrate to D-glycerate and catalyzes the oxidative decarboxylation of D-malate to pyruvate. This chain is Probable tartrate dehydrogenase/decarboxylase TtuC' (ttuC'), found in Agrobacterium vitis (Rhizobium vitis).